Consider the following 239-residue polypeptide: 7-cyano-7-deazaguanine synthase (239 aa).

8-18 (LSGGLDSPTVL) is an ATP binding site. Positions 188, 196, 199, and 202 each coordinate Zn(2+).

It belongs to the QueC family. It depends on Zn(2+) as a cofactor.

The catalysed reaction is 7-carboxy-7-deazaguanine + NH4(+) + ATP = 7-cyano-7-deazaguanine + ADP + phosphate + H2O + H(+). It functions in the pathway purine metabolism; 7-cyano-7-deazaguanine biosynthesis. Its function is as follows. Catalyzes the ATP-dependent conversion of 7-carboxy-7-deazaguanine (CDG) to 7-cyano-7-deazaguanine (preQ(0)). The sequence is that of 7-cyano-7-deazaguanine synthase from Picrophilus torridus (strain ATCC 700027 / DSM 9790 / JCM 10055 / NBRC 100828 / KAW 2/3).